The sequence spans 64 residues: Large ribosomal subunit protein uL30 (64 aa).

The segment at 1–22 (MSEQVKRVRVTQVGSPIGRKPG) is disordered.

This sequence belongs to the universal ribosomal protein uL30 family. In terms of assembly, part of the 50S ribosomal subunit.

The protein is Large ribosomal subunit protein uL30 of Acidiphilium cryptum (strain JF-5).